We begin with the raw amino-acid sequence, 310 residues long: tRNA dimethylallyltransferase (310 aa).

Residue 14–21 participates in ATP binding; it reads GPTASGKS. Residue 16 to 21 participates in substrate binding; it reads TASGKS. Interaction with substrate tRNA regions lie at residues 39–42 and 163–167; these read DSMQ and QRIVR.

Belongs to the IPP transferase family. Monomer. Requires Mg(2+) as cofactor.

The catalysed reaction is adenosine(37) in tRNA + dimethylallyl diphosphate = N(6)-dimethylallyladenosine(37) in tRNA + diphosphate. Catalyzes the transfer of a dimethylallyl group onto the adenine at position 37 in tRNAs that read codons beginning with uridine, leading to the formation of N6-(dimethylallyl)adenosine (i(6)A). The sequence is that of tRNA dimethylallyltransferase from Brucella suis biovar 1 (strain 1330).